Reading from the N-terminus, the 397-residue chain is Argininosuccinate synthase (397 aa).

9 to 17 (AYSGGLDTS) serves as a coordination point for ATP. Tyr87 contacts L-citrulline. Gly117 lines the ATP pocket. Residues Thr119, Asn123, and Asp124 each contribute to the L-aspartate site. Position 123 (Asn123) interacts with L-citrulline. 5 residues coordinate L-citrulline: Arg127, Ser175, Ser184, Glu257, and Tyr269.

It belongs to the argininosuccinate synthase family. Type 1 subfamily. Homotetramer.

It localises to the cytoplasm. It carries out the reaction L-citrulline + L-aspartate + ATP = 2-(N(omega)-L-arginino)succinate + AMP + diphosphate + H(+). The protein operates within amino-acid biosynthesis; L-arginine biosynthesis; L-arginine from L-ornithine and carbamoyl phosphate: step 2/3. The chain is Argininosuccinate synthase from Dictyoglomus turgidum (strain DSM 6724 / Z-1310).